The primary structure comprises 417 residues: Gamma-glutamyl phosphate reductase (417 aa).

Belongs to the gamma-glutamyl phosphate reductase family.

It localises to the cytoplasm. The enzyme catalyses L-glutamate 5-semialdehyde + phosphate + NADP(+) = L-glutamyl 5-phosphate + NADPH + H(+). Its pathway is amino-acid biosynthesis; L-proline biosynthesis; L-glutamate 5-semialdehyde from L-glutamate: step 2/2. Functionally, catalyzes the NADPH-dependent reduction of L-glutamate 5-phosphate into L-glutamate 5-semialdehyde and phosphate. The product spontaneously undergoes cyclization to form 1-pyrroline-5-carboxylate. The protein is Gamma-glutamyl phosphate reductase of Klebsiella pneumoniae subsp. pneumoniae (strain ATCC 700721 / MGH 78578).